The following is a 547-amino-acid chain: MDAFTRAWYALERHYQDTCHILLRDRFAAEPDRFERMHERLDGMLFDYSKNRFGEDTLQLLCRLAETADLEGKMRALRTGAKVNGSEGRAALHTALRLPDGADAVYADGRDVLPEIRRELNRALKFAHSLDDGLYQGITGKRIADFVHIGIGGSDLGPAMCVQALEPFRRQISVHFVSNADPACLDEVLCRLNPETTMFCVASKSFKTPETLLNAEAVKAWYRGAGFSESETAHHFCAVSADTEAAQSFGIAAERVFAMYDWVGGRYSVWSPVGLPVMVAVGGARFRELLAGAHAMDSHFFHTPPRRNIPVLMALIAVWYNNFQHADGQTAVPYSHNLRLLPAWLNQLDMESLGKSRASDGSPAACKTGGIVFGGEGVNCQHAYFQLLHQGTRLIPCDFIVPMTAQGAEDGRSRFTVANAFAQAEALMKGKTLDEARAELADLPEAERERLAPHKEFPGNRPSNSILLDRLTPCNLGMLMAAYEHKTFVQGAIWNVNPFDQWGVEYGKQLAKTIIGELEGGTSVHDASTEGLMAFYRECRLKGGGAA.

The active-site Proton donor is E351. Active-site residues include H382 and K508.

It belongs to the GPI family.

The protein localises to the cytoplasm. The catalysed reaction is alpha-D-glucose 6-phosphate = beta-D-fructose 6-phosphate. It functions in the pathway carbohydrate biosynthesis; gluconeogenesis. The protein operates within carbohydrate degradation; glycolysis; D-glyceraldehyde 3-phosphate and glycerone phosphate from D-glucose: step 2/4. In terms of biological role, catalyzes the reversible isomerization of glucose-6-phosphate to fructose-6-phosphate. The protein is Glucose-6-phosphate isomerase 2 of Neisseria gonorrhoeae (strain ATCC 700825 / FA 1090).